Reading from the N-terminus, the 255-residue chain is Probable transcriptional regulatory protein Rcas_0718 (255 aa).

Belongs to the TACO1 family.

The protein resides in the cytoplasm. The sequence is that of Probable transcriptional regulatory protein Rcas_0718 from Roseiflexus castenholzii (strain DSM 13941 / HLO8).